The primary structure comprises 547 residues: Apolipoprotein N-acyltransferase (547 aa).

The next 5 helical transmembrane spans lie at 31-51 (ILSG…ALIF), 71-91 (FWAG…WIAY), 106-126 (LALL…VAAG), 180-200 (LVGF…MGYV), and 210-230 (ALSH…WGFW). The CN hydrolase domain occupies 247 to 515 (VQANIGNLEK…KYLKNAPLTF (269 aa)). Residue E294 is the Proton acceptor of the active site. Residue K364 is part of the active site. C418 functions as the Nucleophile in the catalytic mechanism. The chain crosses the membrane as a helical span at residues 515–535 (FFVQWGHWDWIVILLVLGAVI).

Belongs to the CN hydrolase family. Apolipoprotein N-acyltransferase subfamily.

The protein resides in the cell inner membrane. The enzyme catalyses N-terminal S-1,2-diacyl-sn-glyceryl-L-cysteinyl-[lipoprotein] + a glycerophospholipid = N-acyl-S-1,2-diacyl-sn-glyceryl-L-cysteinyl-[lipoprotein] + a 2-acyl-sn-glycero-3-phospholipid + H(+). It participates in protein modification; lipoprotein biosynthesis (N-acyl transfer). In terms of biological role, catalyzes the phospholipid dependent N-acylation of the N-terminal cysteine of apolipoprotein, the last step in lipoprotein maturation. The chain is Apolipoprotein N-acyltransferase from Bdellovibrio bacteriovorus (strain ATCC 15356 / DSM 50701 / NCIMB 9529 / HD100).